The following is a 634-amino-acid chain: Dynein axonemal assembly factor 1 (634 aa).

The interval 1–80 (MHPEVSEPPV…SRDDREDRGP (80 aa)) is disordered. Positions 22-42 (AGDHGDAGPGIRKEEISETKE) are enriched in basic and acidic residues. Polar residues predominate over residues 48 to 62 (CTTSCPSQQQPSGDN). The span at 70-80 (HSRDDREDRGP) shows a compositional bias: basic and acidic residues. LRR repeat units lie at residues 101–123 (ALND…EEYT), 124–145 (GLRC…QAQS), 146–167 (ELRC…EPLQ), 168–189 (KLDA…SCLP), 190–211 (VLNT…EHLR), and 215–236 (RLCV…SVLE). An LRRCT domain is found at 249 to 288 (NPVTKHIPNYRRTVTVRLKHLTYLDDRPVFPKDRACAEAW). Positions 326–336 (EERKKARDRGE) are enriched in basic and acidic residues. The interval 326 to 358 (EERKKARDRGETPLPDSEGSIPTSPEAEEKQPM) is disordered. The residue at position 349 (S349) is a Phosphoserine. The residue at position 462 (T462) is a Phosphothreonine. 2 positions are modified to phosphoserine: S465 and S488. Disordered stretches follow at residues 481-505 (ISSL…ATPT) and 559-634 (ELND…FGLD).

It belongs to the DNAAF1 family.

It localises to the cell projection. Its subcellular location is the cilium. Its function is as follows. Cilium-specific protein required for the stability of the ciliary architecture. Plays a role in cytoplasmic preassembly of dynein arms. Involved in regulation of microtubule-based cilia and actin-based brush border microvilli. This Mus musculus (Mouse) protein is Dynein axonemal assembly factor 1 (Dnaaf1).